The primary structure comprises 187 residues: Small ribosomal subunit protein uS4 (187 aa).

The S4 RNA-binding domain occupies 105–174 (RRLQTLVFRK…DNHPERAKIV (70 aa)).

The protein belongs to the universal ribosomal protein uS4 family. In terms of assembly, part of the 30S ribosomal subunit. Contacts protein S5. The interaction surface between S4 and S5 is involved in control of translational fidelity.

In terms of biological role, one of the primary rRNA binding proteins, it binds directly to 16S rRNA where it nucleates assembly of the body of the 30S subunit. Functionally, with S5 and S12 plays an important role in translational accuracy. This is Small ribosomal subunit protein uS4 from Methanocaldococcus jannaschii (strain ATCC 43067 / DSM 2661 / JAL-1 / JCM 10045 / NBRC 100440) (Methanococcus jannaschii).